The sequence spans 261 residues: Methionine aminopeptidase (261 aa).

H78 is a substrate binding site. A divalent metal cation-binding residues include D96, D107, and H170. Residue H177 participates in substrate binding. The a divalent metal cation site is built by E202 and E233.

It belongs to the peptidase M24A family. Methionine aminopeptidase type 1 subfamily. As to quaternary structure, monomer. Requires Co(2+) as cofactor. The cofactor is Zn(2+). Mn(2+) is required as a cofactor. It depends on Fe(2+) as a cofactor.

The catalysed reaction is Release of N-terminal amino acids, preferentially methionine, from peptides and arylamides.. Functionally, removes the N-terminal methionine from nascent proteins. The N-terminal methionine is often cleaved when the second residue in the primary sequence is small and uncharged (Met-Ala-, Cys, Gly, Pro, Ser, Thr, or Val). Requires deformylation of the N(alpha)-formylated initiator methionine before it can be hydrolyzed. The chain is Methionine aminopeptidase from Buchnera aphidicola subsp. Schizaphis graminum (strain Sg).